Reading from the N-terminus, the 371-residue chain is uncharacterized protein (371 aa).

The helical transmembrane segment at 17 to 33 (FLLFSVVLIIVMTTLVF) threads the bilayer.

This sequence to S.pombe SpBC4C3.08 and SpBC4C3.09.

It is found in the membrane. This is an uncharacterized protein from Schizosaccharomyces pombe (strain 972 / ATCC 24843) (Fission yeast).